Here is a 37-residue protein sequence, read N- to C-terminus: Large ribosomal subunit protein bL36 (37 aa).

This sequence belongs to the bacterial ribosomal protein bL36 family.

The sequence is that of Large ribosomal subunit protein bL36 from Acidovorax ebreus (strain TPSY) (Diaphorobacter sp. (strain TPSY)).